We begin with the raw amino-acid sequence, 470 residues long: Aminoacyl transferase sphA (470 aa).

Residues S212, H244, and T272 each coordinate pyridoxal 5'-phosphate. K275 bears the N6-(pyridoxal phosphate)lysine mark.

This sequence belongs to the class-II pyridoxal-phosphate-dependent aminotransferase family. BioF subfamily. Homodimer. Pyridoxal 5'-phosphate is required as a cofactor.

The protein operates within secondary metabolite biosynthesis. Functionally, aminoacyl transferase; part of the gene cluster that mediates the biosynthesis of sphingofungins, bioactive molecules acting as sphingolipid inhibitors via inhibiting serine palmitoyl transferase (SPT). Within the pathway, sphA transfers 2-methyl-aminomalonate and 2-hydroxymethyl-aminomalonate onto the sphB product 3-hydroxyoctadeca-4,10-dienoyl-ACP to produce the precursors of sphingofungins E and F. The substrate specificity of sphA using 2-methyl-aminomalonate and 2-hydroxymethyl-aminomalonate instread of aminomalonate is responsible for the biosynthesis of sphingofungins E and F but not B and C like in Aspergillus fumigatus. The PKS sphB does not contain any putative thioesterase domain for releasing the nascent polyketide chain and it has been suggested that aminoacyl transferases can facilitate the polyketide chain release. The polypeptide is Aminoacyl transferase sphA (Byssochlamys spectabilis (Paecilomyces variotii)).